The following is a 381-amino-acid chain: Spermidine/putrescine import ATP-binding protein PotA (381 aa).

The 231-residue stretch at 19-249 folds into the ABC transporter domain; that stretch reads VELRKVFKVF…PESPFVADFI (231 aa). 51-58 contributes to the ATP binding site; the sequence is GPSGCGKT.

Belongs to the ABC transporter superfamily. Spermidine/putrescine importer (TC 3.A.1.11.1) family. The complex is composed of two ATP-binding proteins (PotA), two transmembrane proteins (PotB and PotC) and a solute-binding protein (PotD).

The protein resides in the cell inner membrane. It catalyses the reaction ATP + H2O + polyamine-[polyamine-binding protein]Side 1 = ADP + phosphate + polyamineSide 2 + [polyamine-binding protein]Side 1.. Its function is as follows. Part of the ABC transporter complex PotABCD involved in spermidine/putrescine import. Responsible for energy coupling to the transport system. This is Spermidine/putrescine import ATP-binding protein PotA from Trichodesmium erythraeum (strain IMS101).